We begin with the raw amino-acid sequence, 1902 residues long: Plexin-B3 (1902 aa).

Residues 1–34 (MLTDFLQAPVMAPWSPFSLHLLLLFLLLLPLTRA) form the signal peptide. A Sema domain is found at 35 to 461 (HRFSVPNASF…TAQQVDRILV (427 aa)). Residues 35 to 1245 (HRFSVPNASF…MISTFPVEAQ (1211 aa)) lie on the Extracellular side of the membrane. A glycan (N-linked (GlcNAc...) asparagine) is linked at asparagine 41. 2 disulfide bridges follow: cysteine 88-cysteine 97 and cysteine 122-cysteine 130. Asparagine 221 carries N-linked (GlcNAc...) asparagine glycosylation. Cystine bridges form between cysteine 257/cysteine 360, cysteine 273/cysteine 305, and cysteine 323/cysteine 347. Residues 353 to 372 (DSPESYPCGDEHTPSPIAGR) are disordered. Residues asparagine 416 and asparagine 469 are each glycosylated (N-linked (GlcNAc...) asparagine). The PSI 1 domain occupies 463–515 (ACPQFPNCTTCLQARDPLCGWCILQGRCTRRAECGRAVQPNQWLWSYEDNHCL). Cystine bridges form between cysteine 464–cysteine 481, cysteine 470–cysteine 514, cysteine 473–cysteine 490, cysteine 484–cysteine 496, and cysteine 551–cysteine 569. 2 PSI domains span residues 609–671 (DCSA…EACP) and 776–822 (DCAM…QLCP). N-linked (GlcNAc...) asparagine glycans are attached at residues asparagine 791, asparagine 889, asparagine 946, asparagine 1090, and asparagine 1207. IPT/TIG domains are found at residues 824–913 (PSID…HFTY), 915–1001 (DPVL…FRYT), and 1003–1134 (NPQL…FLYQ). A helical transmembrane segment spans residues 1246-1266 (VGLGMGAAMLIAAVLLLTLMY). Over 1267 to 1902 (RHKSKQALRD…ALVEYKVTDL (636 aa)) the chain is Cytoplasmic.

Belongs to the plexin family. As to quaternary structure, binds MET and MST1R. Interacts with RIT2/RIN. Interacts (via cytoplasmic domain) with FSCN1 and RAC1. May form homodimers (via Sema domain). Interacts (via cytoplasmic domain) with ARHGDIA. In terms of tissue distribution, expressed in glioma cells (at protein level). Expressed in glioma cells and oligodendrocyte precursor cells.

It is found in the cell membrane. Functionally, receptor for SEMA5A that plays a role in axon guidance, invasive growth and cell migration. Stimulates neurite outgrowth and mediates Ca(2+)/Mg(2+)-dependent cell aggregation. In glioma cells, SEMA5A stimulation of PLXNB3 results in the disassembly of F-actin stress fibers, disruption of focal adhesions and cellular collapse as well as inhibition of cell migration and invasion through ARHGDIA-mediated inactivation of RAC1. In Rattus norvegicus (Rat), this protein is Plexin-B3 (Plxnb3).